The following is a 310-amino-acid chain: Pirin-like protein At1g50590 (310 aa).

Belongs to the pirin family.

It is found in the nucleus. The polypeptide is Pirin-like protein At1g50590 (Arabidopsis thaliana (Mouse-ear cress)).